The sequence spans 706 residues: F-box/WD repeat-containing protein 7 (706 aa).

The segment at 1–157 is disordered; the sequence is MNQELLSVGS…IVDLPIHQRS (157 aa). A Phosphoserine modification is found at S26. Positions 32–54 are enriched in basic and acidic residues; that stretch reads QMNRVLEEEQQQPRHQEEEHAAR. Over residues 69 to 83 the composition is skewed to polar residues; the sequence is NDPQQGQLEENNNRF. Over residues 86 to 128 the composition is skewed to acidic residues; it reads VDEDSSGNQEEQEEDEEHAGEQDEEDEEEEEMDQESDDFDQSD. The span at 129–138 shows a compositional bias: basic and acidic residues; the sequence is DSSREDEHTH. T204 bears the Phosphothreonine mark. Phosphoserine is present on S226. One can recognise an F-box domain in the interval 277–323; it reads RDFISLLPKELALYVLSFLEPKDLLQAAQTCRYWRILAEDNLLWREK. WD repeat units lie at residues 377–417, 419–455, 458–497, 499–535, 538–577, 579–617, and 621–658; these read GHDD…RTLV, HTGG…CIHT, GHTS…HVLM, HVAA…CLHT, GHTN…HTLT, HQSL…QTLQ, and KHQS…FIRN.

Homodimer; homodimerization plays a role in substrate binding and/or ubiquitination and degradation. Component of the SCF(FBXW7) complex consisting of CUL1, RBX1, SKP1 and FBXW7. Interacts (via F-box domain) with SKP1. Interacts (via F-box domain) with pseudophosphatase STYX; the interaction is direct and prevents FBXW7 interaction with SKP1. Interacts with cyclin-E (CCNE1 or CCNE2). Interacts with PSEN1. Forms a trimeric complex with NOTCH1 and SGK1. Interacts with NOTCH1 intracellular domain/NICD and NOTCH4 intracellular domain/NICD. Interacts with NOTCH2 intracellular domain (N2ICD). Interacts with MYC (when phosphorylated). Interacts with USP28, counteracting ubiquitination of MYC. Interacts with JUN. Found in a complex with JUN and PRR7. Interacts with JUN and PRR7; the interaction inhibits ubiquitination-mediated JUN degradation, promoting its phosphorylation and transcriptional activity. Interacts (when phosphorylated at Thr-204) with PIN1, disrupting FBXW7 dimerization and promoting FBXW7 autoubiquitination and degradation. Interacts with UBE2QL1. Interacts with FAM83D; promotes FBXW7 degradation. Interacts with MYCN; FBXW7 competes with AURKA for binding to unphosphorylated MYCN but not for binding to phosphorylated MYCN. Interacts with STOML1. Interacts with NFE2L1. Interacts with USP36, counteracting ubiquitination of MYC. Interacts with RICTOR; mediates RICTOR ubiquitination and degradation.l Interacts with USP38, counteracting ubiquitination of MYC. As to quaternary structure, (Microbial infection) In case of infection, interacts with T.annulata PIN1 (TaPIN1); leading to FBXW7 autoubiquitination and subsequent degradation: FBXW7 degradation promotes stabilization of JUN, which promotes cell transformation. Phosphorylation at Thr-204 promotes interaction with PIN1, leading to disrupt FBXW7 dimerization and promoting FBXW7 autoubiquitination and degradation. Phosphorylated by ATM at Ser-26 in response to DNA damage, promoting recruitment to DNA damage sites and 'Lys-63'-linked ubiquitination of phosphorylated XRCC4. Post-translationally, ubiquitinated: autoubiquitinates following phosphorylation at Thr-204 and subsequent interaction with PIN1. Ubiquitination leads to its degradation.

It is found in the nucleus. The protein resides in the nucleoplasm. The protein localises to the chromosome. It functions in the pathway protein modification; protein ubiquitination. Its function is as follows. Substrate recognition component of a SCF (SKP1-CUL1-F-box protein) E3 ubiquitin-protein ligase complex which mediates the ubiquitination and subsequent proteasomal degradation of target proteins. Recognizes and binds phosphorylated sites/phosphodegrons within target proteins and thereafter brings them to the SCF complex for ubiquitination. Identified substrates include cyclin-E (CCNE1 or CCNE2), DISC1, JUN, MYC, NOTCH1 released notch intracellular domain (NICD), NOTCH2, MCL1, MLST8, RICTOR, and probably PSEN1. Acts as a negative regulator of JNK signaling by binding to phosphorylated JUN and promoting its ubiquitination and subsequent degradation. SCF(FBXW7) complex mediates the ubiquitination and subsequent degradation of NFE2L1. Involved in bone homeostasis and negative regulation of osteoclast differentiation. Also able to promote 'Lys-63'-linked ubiquitination in response to DNA damage. The SCF(FBXW7) complex facilitates double-strand break repair following phosphorylation by ATM: phosphorylation promotes localization to sites of double-strand breaks and 'Lys-63'-linked ubiquitination of phosphorylated XRCC4, enhancing DNA non-homologous end joining. The sequence is that of F-box/WD repeat-containing protein 7 from Bos taurus (Bovine).